A 454-amino-acid chain; its full sequence is UDP-N-acetylmuramoyl-tripeptide--D-alanyl-D-alanine ligase (454 aa).

116 to 122 (GSVGKTT) lines the ATP pocket.

Belongs to the MurCDEF family. MurF subfamily.

The protein resides in the cytoplasm. It catalyses the reaction D-alanyl-D-alanine + UDP-N-acetyl-alpha-D-muramoyl-L-alanyl-gamma-D-glutamyl-meso-2,6-diaminopimelate + ATP = UDP-N-acetyl-alpha-D-muramoyl-L-alanyl-gamma-D-glutamyl-meso-2,6-diaminopimeloyl-D-alanyl-D-alanine + ADP + phosphate + H(+). It functions in the pathway cell wall biogenesis; peptidoglycan biosynthesis. In terms of biological role, involved in cell wall formation. Catalyzes the final step in the synthesis of UDP-N-acetylmuramoyl-pentapeptide, the precursor of murein. The protein is UDP-N-acetylmuramoyl-tripeptide--D-alanyl-D-alanine ligase of Synechocystis sp. (strain ATCC 27184 / PCC 6803 / Kazusa).